Here is a 296-residue protein sequence, read N- to C-terminus: Formamidopyrimidine-DNA glycosylase (296 aa).

The active-site Schiff-base intermediate with DNA is the Pro2. Catalysis depends on Glu3, which acts as the Proton donor. Catalysis depends on Lys58, which acts as the Proton donor; for beta-elimination activity. Residues His106, Arg125, and Lys167 each contribute to the DNA site. The FPG-type zinc-finger motif lies at 258–294; sequence RVYDRVGLPCSRPGCAGAITRIVQANRSTFFCATCQP. Arg284 functions as the Proton donor; for delta-elimination activity in the catalytic mechanism.

Belongs to the FPG family. As to quaternary structure, monomer. Requires Zn(2+) as cofactor.

It carries out the reaction Hydrolysis of DNA containing ring-opened 7-methylguanine residues, releasing 2,6-diamino-4-hydroxy-5-(N-methyl)formamidopyrimidine.. The catalysed reaction is 2'-deoxyribonucleotide-(2'-deoxyribose 5'-phosphate)-2'-deoxyribonucleotide-DNA = a 3'-end 2'-deoxyribonucleotide-(2,3-dehydro-2,3-deoxyribose 5'-phosphate)-DNA + a 5'-end 5'-phospho-2'-deoxyribonucleoside-DNA + H(+). In terms of biological role, involved in base excision repair of DNA damaged by oxidation or by mutagenic agents. Acts as a DNA glycosylase that recognizes and removes damaged bases. Has a preference for oxidized purines, such as 7,8-dihydro-8-oxoguanine (8-oxoG). Has AP (apurinic/apyrimidinic) lyase activity and introduces nicks in the DNA strand. Cleaves the DNA backbone by beta-delta elimination to generate a single-strand break at the site of the removed base with both 3'- and 5'-phosphates. This is Formamidopyrimidine-DNA glycosylase from Methylobacterium radiotolerans (strain ATCC 27329 / DSM 1819 / JCM 2831 / NBRC 15690 / NCIMB 10815 / 0-1).